The following is a 26-amino-acid chain: Turripeptide OL57 (26 aa).

Post-translationally, contains 2 disulfide bonds. Expressed by the venom duct.

Its subcellular location is the secreted. Its function is as follows. Acts as a neurotoxin by inhibiting an ion channel. In Iotyrris olangoensis (Sea snail), this protein is Turripeptide OL57.